Reading from the N-terminus, the 112-residue chain is UPF0375 protein R05A10.4 (112 aa).

The signal sequence occupies residues 1–19; sequence MNLSIFSAIIFSITIASSA. The N-linked (GlcNAc...) asparagine glycan is linked to N59.

The protein belongs to the UPF0375 family.

It is found in the secreted. This Caenorhabditis elegans protein is UPF0375 protein R05A10.4.